A 313-amino-acid polypeptide reads, in one-letter code: MKSGFSHITVLLEEAVDALSIREGGCYLDGTFGRGGHSRLILGRLGAGGILLGFDKDPQAVAAGLALATEDARFVIVQRSFAELADEMKMRGLVGKVSGVLLDLGVSSPQLDDPERGFSFLNDGPLDMRMDPGRGLSAAEWLAQASCEEIAHVFKDYGEERFARRMAQAVVQRRQERPFERTADLAQVLAAANPAWEKGKNPATRAFQGLRIHINNELGDLEQGLDAALEVLEVGGRLAVISFHSLEDRIVKRFMRRQVKGEADKLPRDLPIRPAAFEPRLKLIGKPRYASESELKTNPRARSAIMRVAEKLR.

Residues 35-37 (GGH), Asp55, Phe81, Asp103, and Gln110 contribute to the S-adenosyl-L-methionine site.

The protein belongs to the methyltransferase superfamily. RsmH family.

Its subcellular location is the cytoplasm. The enzyme catalyses cytidine(1402) in 16S rRNA + S-adenosyl-L-methionine = N(4)-methylcytidine(1402) in 16S rRNA + S-adenosyl-L-homocysteine + H(+). In terms of biological role, specifically methylates the N4 position of cytidine in position 1402 (C1402) of 16S rRNA. This is Ribosomal RNA small subunit methyltransferase H from Azotobacter vinelandii (strain DJ / ATCC BAA-1303).